The chain runs to 70 residues: Beta-defensin 107 (70 aa).

A signal peptide spans M1–T26. 2 disulfide bridges follow: C41/C55 and C45/C64.

The protein belongs to the beta-defensin family. As to expression, specifically expressed in testis.

The protein resides in the secreted. In terms of biological role, has antibacterial activity. This is Beta-defensin 107 (DEFB107A) from Homo sapiens (Human).